A 371-amino-acid polypeptide reads, in one-letter code: Peptide chain release factor 2 (371 aa).

Gln247 carries the post-translational modification N5-methylglutamine.

Belongs to the prokaryotic/mitochondrial release factor family. Post-translationally, methylated by PrmC. Methylation increases the termination efficiency of RF2.

Its subcellular location is the cytoplasm. Functionally, peptide chain release factor 2 directs the termination of translation in response to the peptide chain termination codons UGA and UAA. In Caulobacter vibrioides (strain ATCC 19089 / CIP 103742 / CB 15) (Caulobacter crescentus), this protein is Peptide chain release factor 2.